Reading from the N-terminus, the 802-residue chain is DNA mismatch repair protein MutS (802 aa).

Residue 617–624 (GPNMGGKS) coordinates ATP.

This sequence belongs to the DNA mismatch repair MutS family.

In terms of biological role, this protein is involved in the repair of mismatches in DNA. It is possible that it carries out the mismatch recognition step. This protein has a weak ATPase activity. This is DNA mismatch repair protein MutS from Buchnera aphidicola subsp. Acyrthosiphon pisum (strain 5A).